Here is a 284-residue protein sequence, read N- to C-terminus: 2,3,4,5-tetrahydropyridine-2,6-dicarboxylate N-succinyltransferase (284 aa).

The protein belongs to the transferase hexapeptide repeat family.

Its subcellular location is the cytoplasm. It carries out the reaction (S)-2,3,4,5-tetrahydrodipicolinate + succinyl-CoA + H2O = (S)-2-succinylamino-6-oxoheptanedioate + CoA. Its pathway is amino-acid biosynthesis; L-lysine biosynthesis via DAP pathway; LL-2,6-diaminopimelate from (S)-tetrahydrodipicolinate (succinylase route): step 1/3. This chain is 2,3,4,5-tetrahydropyridine-2,6-dicarboxylate N-succinyltransferase, found in Brucella abortus (strain S19).